We begin with the raw amino-acid sequence, 108 residues long: Small ribosomal subunit protein eS25w (108 aa).

The interval 1–36 is disordered; sequence MAPKKDKVPPPSSKPAKSGGGKQKKKKWSKGKQKEK. The span at 22-31 shows a compositional bias: basic residues; that stretch reads KQKKKKWSKG.

This sequence belongs to the eukaryotic ribosomal protein eS25 family.

This chain is Small ribosomal subunit protein eS25w (RPS25E), found in Arabidopsis thaliana (Mouse-ear cress).